A 331-amino-acid chain; its full sequence is MVKSVLASALFAVSALAASRTTAPSGAIVVAKSGGDYTTIGDAIDALSTSTTDTQTIFIEEGTYDEQVYLPAMTGKVIIYGQTENTDSYADNLVTITHAISYEDAGESDDLTATFRNKAVGSQVYNLNIANTCGQACHQALALSAWADQQGYYGCNFTGYQDTLLAQTGNQLYINSYIEGAVDFIFGQHARAWFQNVDIRVVEGPTSASITANGRSSETDTSYYVINKSTVAAKEGDDVAEGTYYLGRPWSEYARVVFQQTSMTNVINSLGWTEWSTSTPNTEYVTFGEYANTGAGSEGTRASFAEKLDAKLTITDILGSDYTSWVDTSYF.

Positions 1–17 (MVKSVLASALFAVSALA) are cleaved as a signal peptide. Gln139 lines the substrate pocket. Residue Asp162 is the Proton donor of the active site. Asp183 functions as the Nucleophile in the catalytic mechanism. Residues Arg248 and Trp250 each contribute to the substrate site.

The protein belongs to the pectinesterase family.

The protein resides in the secreted. The enzyme catalyses [(1-&gt;4)-alpha-D-galacturonosyl methyl ester](n) + n H2O = [(1-&gt;4)-alpha-D-galacturonosyl](n) + n methanol + n H(+). The protein operates within glycan metabolism; pectin degradation; 2-dehydro-3-deoxy-D-gluconate from pectin: step 1/5. Involved in maceration and soft-rotting of plant tissue. The protein is Pectinesterase (pme1) of Aspergillus aculeatus.